The primary structure comprises 286 residues: MSEQNVNVYGADPSTSSIQSIQRTKIRTKHLQKMKAEGHKWAMLTAYDYSTARVFDEAGIPVLLVGDSAANVVYGYDTTVPVSADELLPLVRGVVRGAGHALVVADLPFGSYEPGPTAALAVATRFMKEGGAHAVKLEGGQRVAEQIACLTAAGIPVMAHIGFTPQSVNSLGGFRVQGRGGDAEQTVADAVAVAEAGAFSVVMEMVPTELATQITGKLTIPTIGIGAGLNCDAQVLVWQDMAGLSSGKVARFVKQYADIAGELRRAAMQYAEEVASAVFPAEEHCF.

Residues Asp-67 and Asp-106 each contribute to the Mg(2+) site. Residues 67 to 68 (DS), Asp-106, and Lys-136 each bind 3-methyl-2-oxobutanoate. Glu-138 lines the Mg(2+) pocket. Glu-204 functions as the Proton acceptor in the catalytic mechanism.

This sequence belongs to the PanB family. Homodecamer; pentamer of dimers. Mg(2+) serves as cofactor.

It localises to the cytoplasm. It catalyses the reaction 3-methyl-2-oxobutanoate + (6R)-5,10-methylene-5,6,7,8-tetrahydrofolate + H2O = 2-dehydropantoate + (6S)-5,6,7,8-tetrahydrofolate. It functions in the pathway cofactor biosynthesis; (R)-pantothenate biosynthesis; (R)-pantoate from 3-methyl-2-oxobutanoate: step 1/2. Catalyzes the reversible reaction in which hydroxymethyl group from 5,10-methylenetetrahydrofolate is transferred onto alpha-ketoisovalerate to form ketopantoate. The chain is 3-methyl-2-oxobutanoate hydroxymethyltransferase from Mycobacterium leprae (strain TN).